A 386-amino-acid polypeptide reads, in one-letter code: DNA replication and repair protein RecF (386 aa).

30–37 is an ATP binding site; it reads GANAQGKT.

This sequence belongs to the RecF family.

Its subcellular location is the cytoplasm. In terms of biological role, the RecF protein is involved in DNA metabolism; it is required for DNA replication and normal SOS inducibility. RecF binds preferentially to single-stranded, linear DNA. It also seems to bind ATP. In Natranaerobius thermophilus (strain ATCC BAA-1301 / DSM 18059 / JW/NM-WN-LF), this protein is DNA replication and repair protein RecF.